A 288-amino-acid polypeptide reads, in one-letter code: Pantothenate synthetase (288 aa).

30–37 (MGALHEGH) serves as a coordination point for ATP. His37 acts as the Proton donor in catalysis. A (R)-pantoate-binding site is contributed by Gln61. Gln61 is a binding site for beta-alanine. 147–150 (GEKD) provides a ligand contact to ATP. Gln153 is a binding site for (R)-pantoate. Residues Val176 and 184 to 187 (ISSR) each bind ATP.

Belongs to the pantothenate synthetase family. In terms of assembly, homodimer.

It is found in the cytoplasm. It catalyses the reaction (R)-pantoate + beta-alanine + ATP = (R)-pantothenate + AMP + diphosphate + H(+). It participates in cofactor biosynthesis; (R)-pantothenate biosynthesis; (R)-pantothenate from (R)-pantoate and beta-alanine: step 1/1. Functionally, catalyzes the condensation of pantoate with beta-alanine in an ATP-dependent reaction via a pantoyl-adenylate intermediate. The sequence is that of Pantothenate synthetase from Chlorobium phaeobacteroides (strain BS1).